A 333-amino-acid polypeptide reads, in one-letter code: Large ribosomal subunit protein uL3 (333 aa).

This sequence belongs to the universal ribosomal protein uL3 family. As to quaternary structure, part of the 50S ribosomal subunit. Forms a cluster with proteins L14 and L24e.

One of the primary rRNA binding proteins, it binds directly near the 3'-end of the 23S rRNA, where it nucleates assembly of the 50S subunit. This chain is Large ribosomal subunit protein uL3, found in Methanocorpusculum labreanum (strain ATCC 43576 / DSM 4855 / Z).